The primary structure comprises 218 residues: Thiopurine S-methyltransferase (218 aa).

4 residues coordinate S-adenosyl-L-methionine: Trp-10, Leu-45, Glu-66, and Arg-123.

It belongs to the class I-like SAM-binding methyltransferase superfamily. TPMT family.

Its subcellular location is the cytoplasm. It carries out the reaction S-adenosyl-L-methionine + a thiopurine = S-adenosyl-L-homocysteine + a thiopurine S-methylether.. This Shewanella baltica (strain OS155 / ATCC BAA-1091) protein is Thiopurine S-methyltransferase.